We begin with the raw amino-acid sequence, 416 residues long: Peptide chain release factor subunit 1 (416 aa).

It belongs to the eukaryotic release factor 1 family. Heterodimer of two subunits, one of which binds GTP.

The protein localises to the cytoplasm. Directs the termination of nascent peptide synthesis (translation) in response to the termination codons UAA, UAG and UGA. The polypeptide is Peptide chain release factor subunit 1 (Haloquadratum walsbyi (strain DSM 16790 / HBSQ001)).